A 332-amino-acid polypeptide reads, in one-letter code: Cytoplasmic phosphatidylinositol transfer protein 1 (332 aa).

Phosphoserine occurs at positions 119, 270, and 274. The segment covering 267-285 (SVRSAPSSAPSTPLSTDAP) has biased composition (low complexity). Residues 267-332 (SVRSAPSSAP…SDKPCRPKSE (66 aa)) are disordered. Residue T278 is modified to Phosphothreonine. The segment covering 322 to 332 (SSDKPCRPKSE) has biased composition (basic and acidic residues).

It belongs to the PtdIns transfer protein family. PI transfer class IIB subfamily. Ubiquitously expressed.

It localises to the cytoplasm. The enzyme catalyses a 1,2-diacyl-sn-glycero-3-phospho-(1D-myo-inositol)(in) = a 1,2-diacyl-sn-glycero-3-phospho-(1D-myo-inositol)(out). The catalysed reaction is a 1,2-diacyl-sn-glycero-3-phosphate(in) = a 1,2-diacyl-sn-glycero-3-phosphate(out). In terms of biological role, catalyzes the transfer of phosphatidylinositol (PI) and phosphatidic acid (PA) between membranes. Binds PA derived from the phospholipase D signaling pathway and among the cellular PA species, preferably binds to the C16:0/16:1 and C16:1/18:1 PA species. Its function is as follows. Catalyzes the transfer of phosphatidylinositol between membranes. This is Cytoplasmic phosphatidylinositol transfer protein 1 (PITPNC1) from Homo sapiens (Human).